A 588-amino-acid polypeptide reads, in one-letter code: Polyphenol oxidase II, chloroplastic (588 aa).

The segment covering 1-10 (MASFTTSPCT) has biased composition (polar residues). Positions 1–32 (MASFTTSPCTSAAPKTPKSLSSSATISSPLPK) are disordered. The N-terminal 50 residues, 1 to 50 (MASFTTSPCTSAAPKTPKSLSSSATISSPLPKPSQIHIATAKRTHHFKVS), are a transit peptide targeting the chloroplast. The segment covering 16–29 (TPKSLSSSATISSP) has biased composition (low complexity). The transit peptide at 51–88 (CNAPNGDSQPKLDRRDVLLGLGGLAGAASLINNPLAFA) directs the protein to the thylakoid. Intrachain disulfides connect cysteine 99-cysteine 116 and cysteine 115-cysteine 179. The Cu cation site is built by histidine 178, histidine 199, histidine 208, histidine 330, histidine 334, and histidine 366. The segment at residues 182-199 (CNGGYVQTDYPDKEIQVH) is a cross-link (2'-(S-cysteinyl)-histidine (Cys-His)).

Belongs to the tyrosinase family. As to quaternary structure, monomer. Cu(2+) serves as cofactor.

It localises to the plastid. The protein localises to the chloroplast thylakoid lumen. The enzyme catalyses 2 catechol + O2 = 2 1,2-benzoquinone + 2 H2O. In terms of biological role, catalyzes the oxidation of mono- and o-diphenols to o-diquinones. The chain is Polyphenol oxidase II, chloroplastic (co-2) from Ipomoea batatas (Sweet potato).